A 1131-amino-acid chain; its full sequence is DNA polymerase II large subunit (1131 aa).

This sequence belongs to the archaeal DNA polymerase II family. Heterodimer of a large subunit and a small subunit.

The catalysed reaction is DNA(n) + a 2'-deoxyribonucleoside 5'-triphosphate = DNA(n+1) + diphosphate. It catalyses the reaction Exonucleolytic cleavage in the 3'- to 5'-direction to yield nucleoside 5'-phosphates.. Possesses two activities: a DNA synthesis (polymerase) and an exonucleolytic activity that degrades single-stranded DNA in the 3'- to 5'-direction. Has a template-primer preference which is characteristic of a replicative DNA polymerase. The chain is DNA polymerase II large subunit from Methanococcus maripaludis (strain C7 / ATCC BAA-1331).